We begin with the raw amino-acid sequence, 98 residues long: NADH-ubiquinone oxidoreductase chain 4L (98 aa).

A run of 3 helical transmembrane segments spans residues 1–21, 29–49, and 61–81; these read MSMVYINIFLAFIMSLMGLLM, SLLCLEGMMLSLFIMMTMVVL, and IILLVFAACEAALGLSLLVMV.

It belongs to the complex I subunit 4L family. Core subunit of respiratory chain NADH dehydrogenase (Complex I) which is composed of 45 different subunits.

The protein localises to the mitochondrion inner membrane. It catalyses the reaction a ubiquinone + NADH + 5 H(+)(in) = a ubiquinol + NAD(+) + 4 H(+)(out). In terms of biological role, core subunit of the mitochondrial membrane respiratory chain NADH dehydrogenase (Complex I) which catalyzes electron transfer from NADH through the respiratory chain, using ubiquinone as an electron acceptor. Part of the enzyme membrane arm which is embedded in the lipid bilayer and involved in proton translocation. This is NADH-ubiquinone oxidoreductase chain 4L (MT-ND4L) from Acinonyx jubatus (Cheetah).